Reading from the N-terminus, the 220-residue chain is UPF0441 protein Spro_4274 (220 aa).

The segment at 181–220 (MAPKPAVTNTVTRGGFGESVAKQTSMQRSSATSSSRSMGG) is disordered. The span at 203–220 (QTSMQRSSATSSSRSMGG) shows a compositional bias: low complexity.

Belongs to the UPF0441 family.

The polypeptide is UPF0441 protein Spro_4274 (Serratia proteamaculans (strain 568)).